The following is a 341-amino-acid chain: Very-long-chain 3-oxoacyl-CoA reductase (341 aa).

The chain crosses the membrane as a helical span at residues 22 to 42 (AIYGFLLAGVAAFAAPIVSTI). Residues L67, D123, D131, N150, Y217, K221, I250, and T252 each contribute to the NADP(+) site. Y217 (proton donor) is an active-site residue. Catalysis depends on K221, which acts as the Lowers pKa of active site Tyr.

Belongs to the short-chain dehydrogenases/reductases (SDR) family.

It is found in the endoplasmic reticulum membrane. It carries out the reaction a very-long-chain (3R)-3-hydroxyacyl-CoA + NADP(+) = a very-long-chain 3-oxoacyl-CoA + NADPH + H(+). It functions in the pathway lipid metabolism; fatty acid biosynthesis. Functionally, component of the microsomal membrane bound fatty acid elongation system, which produces the 26-carbon very long-chain fatty acids (VLCFA) from palmitate. Catalyzes the reduction of the 3-ketoacyl-CoA intermediate that is formed in each cycle of fatty acid elongation. VLCFAs serve as precursors for ceramide and sphingolipids. This chain is Very-long-chain 3-oxoacyl-CoA reductase, found in Phaeosphaeria nodorum (strain SN15 / ATCC MYA-4574 / FGSC 10173) (Glume blotch fungus).